Consider the following 301-residue polypeptide: Formylmethanofuran--tetrahydromethanopterin formyltransferase-like protein (301 aa).

It belongs to the FTR family.

The protein is Formylmethanofuran--tetrahydromethanopterin formyltransferase-like protein of Archaeoglobus fulgidus (strain ATCC 49558 / DSM 4304 / JCM 9628 / NBRC 100126 / VC-16).